A 264-amino-acid chain; its full sequence is Ribosome-recycling factor, mitochondrial (264 aa).

Belongs to the RRF family.

The protein resides in the mitochondrion. Functionally, necessary for protein synthesis in mitochondria. Functions as a ribosome recycling factor in mitochondria. This Yarrowia lipolytica (strain CLIB 122 / E 150) (Yeast) protein is Ribosome-recycling factor, mitochondrial (RRF1).